A 1368-amino-acid chain; its full sequence is DNA-directed RNA polymerase subunit beta (1368 aa).

The protein belongs to the RNA polymerase beta chain family. In terms of assembly, the RNAP catalytic core consists of 2 alpha, 1 beta, 1 beta' and 1 omega subunit. When a sigma factor is associated with the core the holoenzyme is formed, which can initiate transcription.

The catalysed reaction is RNA(n) + a ribonucleoside 5'-triphosphate = RNA(n+1) + diphosphate. In terms of biological role, DNA-dependent RNA polymerase catalyzes the transcription of DNA into RNA using the four ribonucleoside triphosphates as substrates. This is DNA-directed RNA polymerase subunit beta from Burkholderia thailandensis (strain ATCC 700388 / DSM 13276 / CCUG 48851 / CIP 106301 / E264).